Reading from the N-terminus, the 224-residue chain is Ribosomal RNA large subunit methyltransferase E (224 aa).

The S-adenosyl-L-methionine site is built by G64, W66, D97, D113, and D138. The active-site Proton acceptor is the K178.

The protein belongs to the class I-like SAM-binding methyltransferase superfamily. RNA methyltransferase RlmE family.

It is found in the cytoplasm. It catalyses the reaction uridine(2552) in 23S rRNA + S-adenosyl-L-methionine = 2'-O-methyluridine(2552) in 23S rRNA + S-adenosyl-L-homocysteine + H(+). Specifically methylates the uridine in position 2552 of 23S rRNA at the 2'-O position of the ribose in the fully assembled 50S ribosomal subunit. This Methylibium petroleiphilum (strain ATCC BAA-1232 / LMG 22953 / PM1) protein is Ribosomal RNA large subunit methyltransferase E.